A 423-amino-acid chain; its full sequence is CinA-like protein (423 aa).

The protein belongs to the CinA family.

This is CinA-like protein from Synechococcus sp. (strain CC9311).